Here is a 485-residue protein sequence, read N- to C-terminus: MASEVRVRFAPSPTGHLHIGGARSALFNYLFAKNQGGMFVLRIEDTDQARNVGQAKEKLLDSLKWLGVEWDESIDVGGEYGPYSSMERLDIYKKHIEQLLNEGKAYYCYMTEEELEAEREAQIARGEMPKYSGRDRDLTEEQRRAYEAKGIKPVVRFRVPEGQVIKIQDAVRGEVSFESDGIGDFVIARKDGVPMYNFAVVVDDHLMKISHVIRGEEHLSNTPRQVMLYEAFGWDVPTFAHASLILNPNRQKMSKRDESIIQFVEQYKELGYMPEAIVNFLALLGWSPVGEEEIFSLEELAAQFSLERVSKAPAVFDTDKLAWMNNQYIKNADLDDVVALALPHLQKAGKLPESLSEEQAEWAKAVISLYQEQLHYGAEIVELTELFFKTEIQYNDEAQEVLNEEQVPGVLSGFLQELEGLDTWDAVSIKGAIKATQKATGQKGKKLFMPIRVATTGQTHGPELPSAIKLIGKEIVTHRLRSLLN.

The 'HIGH' region signature appears at 11-21 (PSPTGHLHIGG). The 'KMSKS' region signature appears at 252 to 256 (KMSKR). Residue Lys255 participates in ATP binding.

It belongs to the class-I aminoacyl-tRNA synthetase family. Glutamate--tRNA ligase type 1 subfamily. Monomer.

It is found in the cytoplasm. The enzyme catalyses tRNA(Glu) + L-glutamate + ATP = L-glutamyl-tRNA(Glu) + AMP + diphosphate. Its function is as follows. Catalyzes the attachment of glutamate to tRNA(Glu) in a two-step reaction: glutamate is first activated by ATP to form Glu-AMP and then transferred to the acceptor end of tRNA(Glu). This Halalkalibacterium halodurans (strain ATCC BAA-125 / DSM 18197 / FERM 7344 / JCM 9153 / C-125) (Bacillus halodurans) protein is Glutamate--tRNA ligase.